The following is a 128-amino-acid chain: Aspartate 1-decarboxylase (128 aa).

Serine 25 acts as the Schiff-base intermediate with substrate; via pyruvic acid in catalysis. A Pyruvic acid (Ser) modification is found at serine 25. Threonine 57 is a binding site for substrate. Residue tyrosine 58 is the Proton donor of the active site. 73–75 is a substrate binding site; the sequence is GAA.

It belongs to the PanD family. In terms of assembly, heterooctamer of four alpha and four beta subunits. Pyruvate serves as cofactor. Is synthesized initially as an inactive proenzyme, which is activated by self-cleavage at a specific serine bond to produce a beta-subunit with a hydroxyl group at its C-terminus and an alpha-subunit with a pyruvoyl group at its N-terminus.

The protein resides in the cytoplasm. It catalyses the reaction L-aspartate + H(+) = beta-alanine + CO2. Its pathway is cofactor biosynthesis; (R)-pantothenate biosynthesis; beta-alanine from L-aspartate: step 1/1. Its function is as follows. Catalyzes the pyruvoyl-dependent decarboxylation of aspartate to produce beta-alanine. The protein is Aspartate 1-decarboxylase of Ruminiclostridium cellulolyticum (strain ATCC 35319 / DSM 5812 / JCM 6584 / H10) (Clostridium cellulolyticum).